Reading from the N-terminus, the 134-residue chain is Small ribosomal subunit protein uS8c (134 aa).

The protein belongs to the universal ribosomal protein uS8 family. As to quaternary structure, part of the 30S ribosomal subunit.

Its subcellular location is the plastid. It is found in the chloroplast. Functionally, one of the primary rRNA binding proteins, it binds directly to 16S rRNA central domain where it helps coordinate assembly of the platform of the 30S subunit. The protein is Small ribosomal subunit protein uS8c (rps8) of Arabidopsis thaliana (Mouse-ear cress).